The sequence spans 391 residues: Phosphoglycerate kinase (391 aa).

Substrate is bound by residues 21–23 (DLN), arginine 36, 59–62 (HLGR), arginine 113, and arginine 146. Residues lysine 197, glutamate 319, and 345 to 348 (GGDT) contribute to the ATP site.

It belongs to the phosphoglycerate kinase family. As to quaternary structure, monomer.

The protein localises to the cytoplasm. It catalyses the reaction (2R)-3-phosphoglycerate + ATP = (2R)-3-phospho-glyceroyl phosphate + ADP. Its pathway is carbohydrate degradation; glycolysis; pyruvate from D-glyceraldehyde 3-phosphate: step 2/5. The protein is Phosphoglycerate kinase of Xylella fastidiosa (strain 9a5c).